The following is a 143-amino-acid chain: uncharacterized protein (143 aa).

Residues 1 to 37 (MSAPASSSAIAPSQPTAPGHARHSASWSASASDPSGA) are disordered.

The protein belongs to the dynein light chain Tctex-type family.

This is an uncharacterized protein from Mycosarcoma maydis (Corn smut fungus).